The sequence spans 627 residues: BEL1-like homeodomain protein 4 (627 aa).

The tract at residues 206–225 (SSQHHHHQVVGHFGSSSSSP) is disordered. Residues 215–225 (VGHFGSSSSSP) are compositionally biased toward low complexity. The segment at 241-257 (SKYTKPAQELLEEFCSV) is SR/KY domain. A disordered region spans residues 263 to 307 (KKNKLSRNNSNPNTTGGGGGGGSSSSAGTANDSPPLSPADRIEHQ). The tract at residues 302-373 (DRIEHQRRKV…CLKDAVAVQL (72 aa)) is BELL domain. A DNA-binding region (homeobox) is located at residues 424 to 486 (AWRPQRGLPE…NARVRLWKPM (63 aa)). Positions 494-530 (EAKEREEAEEENENQQQQRRQQQTNNNDTKPNNNENN) are disordered. A compositionally biased stretch (low complexity) spans 507-530 (NQQQQRRQQQTNNNDTKPNNNENN).

It belongs to the TALE/BELL homeobox family. As to quaternary structure, may form heterodimeric complexes with TALE/KNOX proteins. Interacts with OFP1, OFP2 and OFP5. Interacts with KNATM, isoform KNATM-B. As to expression, expressed in lateral organs.

The protein resides in the nucleus. In terms of biological role, transcription factor that establishes leaf shape by repressing growth in specific subdomains of the leaf. Negatively regulates knox homeobox gene KNAT1/BP expression. This is BEL1-like homeodomain protein 4 (BLH4) from Arabidopsis thaliana (Mouse-ear cress).